The chain runs to 633 residues: Rab11 family-interacting protein 4 (633 aa).

2 consecutive EF-hand domains span residues 17–52 (LFLQ…FAQG) and 50–85 (AQGD…MKGC). 7 residues coordinate Ca(2+): Asp-30, Asp-32, Asp-34, Asp-63, Asn-65, Arg-69, and Asp-74. 2 disordered regions span residues 152 to 182 (SDLD…LGSL) and 218 to 257 (GEGE…QTPR). Residues 238 to 254 (TNALSDLGSSVPSSAGQ) show a composition bias toward polar residues. A coiled-coil region spans residues 410-613 (AREKGTEIVL…EEINYRLRQY (204 aa)). The region spanning 570 to 632 (EAKSLFSTQT…DHNPSILEIK (63 aa)) is the FIP-RBD domain.

As to quaternary structure, homodimer. Forms a complex with Rab11 (rab11a or rab11b) and arf6.

The protein localises to the recycling endosome membrane. Its subcellular location is the cleavage furrow. It localises to the midbody. It is found in the cytoplasmic vesicle. Functionally, acts as a regulator of endocytic traffic by participating in membrane delivery. Required for the abscission step in cytokinesis, possibly by acting as an 'address tag' delivering recycling endosome membranes to the cleavage furrow during late cytokinesis. In Xenopus tropicalis (Western clawed frog), this protein is Rab11 family-interacting protein 4 (rab11fip4).